Consider the following 705-residue polypeptide: MENKSLQPPLPRSERRIRVLHNDVTIDSYGWLRDREDPDVLAYLEAENHYADEVTSYVAELKADLIAEIEKRDSCDGAPPPFQVGFFFYFQKSQSGLLHSAWWRRPVTGGPEELVFDPNTLPGAEVFYSLGALEPSDDGRYIAFSFDLIGNERYELRVRDMTNGREIWRDPSRAGRLVWAADNRTLFFTRERADRRQHDRVVRLDVETGRSEVVFEEVNERLALVVRRSGSGAYLFIDVIITSDMSSRIQRAAAEVWCLPAERPTDMWRRILARELGHEIYAEHWGNEFLFRVNDTGPNLRLVRTAIDDTSPSRWQEVVPHRAGITLEEIHVLEEHVIVLEREGIQPRLVAHHRNGRVGPSIVPVEHSCTVTVGLSAGGSYSCARHPYRVSALTYKICSFVTPDIFIQHDLLTDKSKVLYRTLVSGFEPELYEARVVMAKAEDGVEVPISIVARRDRGEDGPVLLNVYGCYGAQSLPAFFGWPSSMTARLSLLDRGVAFGIVHVRGGGELGRAWHEAATRDQKRLTHTDLIAAAECLVEHRFASRDGIVIEGRSAGGGTVLAAAVLRPDLFRAVLAEVPLADIIDTELDFTLPYALRETAEYGDPHLANDYQYLRSYDPYYNLTPDRRYPPTYIDAALHDSQVLYYQPARYVAQRRSKAVDRDPDLIFRTRMIGGHMGVSHGPGVAEEAAFRMAWILHRLGQSGR.

Active-site charge relay system residues include serine 554 and histidine 676.

It belongs to the peptidase S9A family.

This is an uncharacterized protein from Sinorhizobium fredii (strain NBRC 101917 / NGR234).